Consider the following 550-residue polypeptide: Leucine-rich repeat LGI family member 2 (550 aa).

The signal sequence occupies residues 1 to 25 (MALWRGGGALGLLLLSAACLIPPSA). The LRRNT domain maps to 26-62 (QVRRLARCPATCSCTKESIICVGSSWVPRIVPGDISS). A glycan (N-linked (GlcNAc...) asparagine) is linked at Asn67. LRR repeat units follow at residues 83–104 (SLQL…AFAG) and 107–128 (HLEY…AFRG). Positions 140–190 (NKFECDCKAKWLYLWLKMTNSTVSDVLCIGPPEYQEKKLNEVTSFDYECTT) constitute an LRRCT domain. N-linked (GlcNAc...) asparagine glycosylation occurs at Asn159. 7 EAR repeats span residues 224–266 (DFVV…EWDH), 270–312 (NFRS…KYDE), 316–363 (KFVK…KWNS), 365–408 (GFYS…QWNK), 412–455 (KFVP…RWNS), 457–499 (QFVE…QWDK), and 503–545 (QFKK…EHII). N-linked (GlcNAc...) asparagine glycosylation occurs at Asn276. A glycan (N-linked (GlcNAc...) asparagine) is linked at Asn407.

As to expression, brain.

The protein localises to the secreted. Its function is as follows. Required for the development of soma-targeting inhibitory GABAergic synapses made by parvalbumin-positive basket cells. In Mus musculus (Mouse), this protein is Leucine-rich repeat LGI family member 2 (Lgi2).